The primary structure comprises 130 residues: Inner membrane protein YqjF (130 aa).

At 1–5 the chain is on the cytoplasmic side; the sequence is MKKLE. A helical transmembrane segment spans residues 6–26; sequence DVGVLVARILMPILFITAGWG. Residues 27-45 lie on the Periplasmic side of the membrane; that stretch reads KITGYAGTQQYMEAMGVPG. The chain crosses the membrane as a helical span at residues 46 to 66; the sequence is FMLPLVILLEFGGGLAILFGF. The Cytoplasmic segment spans residues 67-70; it reads LTRT. A helical membrane pass occupies residues 71–91; the sequence is TALFTAGFTLLTAFLFHSNFA. Residues 92–101 are Periplasmic-facing; sequence EGVNSLMFMK. A helical membrane pass occupies residues 102–122; that stretch reads NLTISGGFLLLAITGPGAYSI. The Cytoplasmic segment spans residues 123 to 130; the sequence is DRLLNKKW.

The protein belongs to the DoxX family.

Its subcellular location is the cell inner membrane. This is Inner membrane protein YqjF (yqjF) from Escherichia coli (strain K12).